Here is a 48-residue protein sequence, read N- to C-terminus: Small ribosomal subunit protein uS14 (48 aa).

Residues Cys-13, Cys-16, Cys-31, and Cys-34 each coordinate Zn(2+).

Belongs to the universal ribosomal protein uS14 family. Zinc-binding uS14 subfamily. In terms of assembly, part of the 30S ribosomal subunit. The cofactor is Zn(2+).

Functionally, binds 16S rRNA, required for the assembly of 30S particles. In Methanopyrus kandleri (strain AV19 / DSM 6324 / JCM 9639 / NBRC 100938), this protein is Small ribosomal subunit protein uS14.